Reading from the N-terminus, the 332-residue chain is Aspartate carbamoyltransferase catalytic subunit (332 aa).

Carbamoyl phosphate contacts are provided by R78 and T79. K106 provides a ligand contact to L-aspartate. R128, H156, and Q159 together coordinate carbamoyl phosphate. R189 and R243 together coordinate L-aspartate. Residues G284 and P285 each coordinate carbamoyl phosphate.

Belongs to the aspartate/ornithine carbamoyltransferase superfamily. ATCase family. In terms of assembly, heterododecamer (2C3:3R2) of six catalytic PyrB chains organized as two trimers (C3), and six regulatory PyrI chains organized as three dimers (R2).

It carries out the reaction carbamoyl phosphate + L-aspartate = N-carbamoyl-L-aspartate + phosphate + H(+). Its pathway is pyrimidine metabolism; UMP biosynthesis via de novo pathway; (S)-dihydroorotate from bicarbonate: step 2/3. In terms of biological role, catalyzes the condensation of carbamoyl phosphate and aspartate to form carbamoyl aspartate and inorganic phosphate, the committed step in the de novo pyrimidine nucleotide biosynthesis pathway. The polypeptide is Aspartate carbamoyltransferase catalytic subunit (Caulobacter vibrioides (strain ATCC 19089 / CIP 103742 / CB 15) (Caulobacter crescentus)).